A 526-amino-acid chain; its full sequence is Peptide chain release factor 3 (526 aa).

Residues 8–277 form the tr-type G domain; it reads NKRRTFAIIS…GLTEWAPKPQ (270 aa). Residues 17–24, 85–89, and 139–142 each bind GTP; these read SHPDAGKT, DTPGH, and NKLD.

It belongs to the TRAFAC class translation factor GTPase superfamily. Classic translation factor GTPase family. PrfC subfamily.

Its subcellular location is the cytoplasm. Functionally, increases the formation of ribosomal termination complexes and stimulates activities of RF-1 and RF-2. It binds guanine nucleotides and has strong preference for UGA stop codons. It may interact directly with the ribosome. The stimulation of RF-1 and RF-2 is significantly reduced by GTP and GDP, but not by GMP. In Haemophilus ducreyi (strain 35000HP / ATCC 700724), this protein is Peptide chain release factor 3.